The chain runs to 353 residues: S-adenosylmethionine:tRNA ribosyltransferase-isomerase (353 aa).

This sequence belongs to the QueA family. In terms of assembly, monomer.

It is found in the cytoplasm. It carries out the reaction 7-aminomethyl-7-carbaguanosine(34) in tRNA + S-adenosyl-L-methionine = epoxyqueuosine(34) in tRNA + adenine + L-methionine + 2 H(+). The protein operates within tRNA modification; tRNA-queuosine biosynthesis. Functionally, transfers and isomerizes the ribose moiety from AdoMet to the 7-aminomethyl group of 7-deazaguanine (preQ1-tRNA) to give epoxyqueuosine (oQ-tRNA). The protein is S-adenosylmethionine:tRNA ribosyltransferase-isomerase of Marinomonas sp. (strain MWYL1).